The sequence spans 422 residues: Probable tRNA pseudouridine synthase D 2 (422 aa).

Residue Asp-89 is the Nucleophile of the active site. Positions 160–371 (GAPNYFDSQR…IYSERKILSI (212 aa)) constitute a TRUD domain.

This sequence belongs to the pseudouridine synthase TruD family.

The catalysed reaction is uridine(13) in tRNA = pseudouridine(13) in tRNA. Could be responsible for synthesis of pseudouridine from uracil-13 in transfer RNAs. The sequence is that of Probable tRNA pseudouridine synthase D 2 from Methanocaldococcus jannaschii (strain ATCC 43067 / DSM 2661 / JAL-1 / JCM 10045 / NBRC 100440) (Methanococcus jannaschii).